The chain runs to 599 residues: Cytadherence high molecular weight protein 3 (599 aa).

A compositionally biased stretch (polar residues) spans 220 to 236; sequence VQVDSGSQNHSFNNSPS. A disordered region spans residues 220–241; sequence VQVDSGSQNHSFNNSPSLKPPL.

The protein resides in the cell projection. It localises to the attachment organelle membrane. Its function is as follows. Component of the cytoskeleton-like structure which stabilizes the shape of the wall-less mycoplasma. This cytoskeleton-like network of accessory proteins containing HMW proteins 1 to 5 allows the proper anchoring of cytadhesin proteins in the mycoplasmal membrane at the attachment organelle. Essential for successful surface parasitism. This chain is Cytadherence high molecular weight protein 3 (hmw3), found in Mycoplasma genitalium (strain ATCC 33530 / DSM 19775 / NCTC 10195 / G37) (Mycoplasmoides genitalium).